A 57-amino-acid polypeptide reads, in one-letter code: Large ribosomal subunit protein bL32 (57 aa).

The span at 1–19 (MATPKRRMSRANTRSRRAQ) shows a compositional bias: basic residues. The interval 1–20 (MATPKRRMSRANTRSRRAQW) is disordered.

It belongs to the bacterial ribosomal protein bL32 family.

This is Large ribosomal subunit protein bL32 from Mycobacterium leprae (strain Br4923).